Here is a 160-residue protein sequence, read N- to C-terminus: Nucleotide-binding protein CBU_0114 (160 aa).

It belongs to the YajQ family.

Functionally, nucleotide-binding protein. The chain is Nucleotide-binding protein CBU_0114 from Coxiella burnetii (strain RSA 493 / Nine Mile phase I).